Reading from the N-terminus, the 630-residue chain is Lysophospholipase 3 (630 aa).

Positions 1 to 16 (MKALLSLLTAVAVATA) are cleaved as a signal peptide. Residues 39–587 (SCPATRPSIR…KEYCWNGTVD (549 aa)) form the PLA2c domain. Asn56, Asn95, Asn164, Asn220, Asn283, Asn351, Asn390, Asn443, Asn456, Asn462, Asn493, Asn514, Asn542, Asn566, and Asn583 each carry an N-linked (GlcNAc...) asparagine glycan. Asn606 carries GPI-like-anchor amidated asparagine lipidation. The propeptide at 607–630 (AAYTQGVTWLVGILAVGVAMGMTA) is removed in mature form.

This sequence belongs to the lysophospholipase family. Post-translationally, the GPI-like anchor contains a phosphoceramide lipid group.

Its subcellular location is the cell membrane. It catalyses the reaction a 1-acyl-sn-glycero-3-phosphocholine + H2O = sn-glycerol 3-phosphocholine + a fatty acid + H(+). Catalyzes the release of fatty acids from lysophospholipids. The protein is Lysophospholipase 3 (plb3) of Aspergillus fumigatus (strain CBS 144.89 / FGSC A1163 / CEA10) (Neosartorya fumigata).